We begin with the raw amino-acid sequence, 228 residues long: Type II methyltransferase M.HhaII (228 aa).

Belongs to the N(4)/N(6)-methyltransferase family.

It carries out the reaction a 2'-deoxyadenosine in DNA + S-adenosyl-L-methionine = an N(6)-methyl-2'-deoxyadenosine in DNA + S-adenosyl-L-homocysteine + H(+). A beta subtype methylase, recognizes the double-stranded sequence 5'-GANTC-3', methylates A-2 on both strands, and protects the DNA from cleavage by the HhaII endonuclease. This is Type II methyltransferase M.HhaII from Haemophilus parahaemolyticus.